The sequence spans 118 residues: Small nuclear ribonucleoprotein Sm D2 (118 aa).

The tract at residues 1–31 (MSLLNKPKSEMTPEELQKREEEEFNTGPLSV) is disordered. S2 carries the post-translational modification N-acetylserine. Glycyl lysine isopeptide (Lys-Gly) (interchain with G-Cter in SUMO2) cross-links involve residues K6 and K8. Basic and acidic residues predominate over residues 7 to 21 (PKSEMTPEELQKREE). Residue S9 is modified to Phosphoserine. A Phosphothreonine modification is found at T12. One can recognise a Sm domain in the interval 29-115 (LSVLTQSVKN…VIVVLRNPLI (87 aa)).

It belongs to the snRNP core protein family. Core component of the spliceosomal U1, U2, U4 and U5 small nuclear ribonucleoproteins (snRNPs), the building blocks of the spliceosome. Most spliceosomal snRNPs contain a common set of Sm proteins, SNRPB, SNRPD1, SNRPD2, SNRPD3, SNRPE, SNRPF and SNRPG that assemble in a heptameric protein ring on the Sm site of the small nuclear RNA to form the core snRNP. Component of the U1 snRNP. The U1 snRNP is composed of the U1 snRNA and the 7 core Sm proteins SNRPB, SNRPD1, SNRPD2, SNRPD3, SNRPE, SNRPF and SNRPG, and at least three U1 snRNP-specific proteins SNRNP70/U1-70K, SNRPA/U1-A and SNRPC/U1-C. Component of the U4/U6-U5 tri-snRNP complex composed of the U4, U6 and U5 snRNAs and at least PRPF3, PRPF4, PRPF6, PRPF8, PRPF31, SNRNP200, TXNL4A, SNRNP40, SNRPB, SNRPD1, SNRPD2, SNRPD3, SNRPE, SNRPF, SNRPG, DDX23, CD2BP2, PPIH, SNU13, EFTUD2, SART1 and USP39, plus LSM2, LSM3, LSM4, LSM5, LSM6, LSM7 and LSM8. Component of the minor spliceosome, which splices U12-type introns. Part of the SMN-Sm complex that contains SMN1, GEMIN2/SIP1, DDX20/GEMIN3, GEMIN4, GEMIN5, GEMIN6, GEMIN7, GEMIN8, STRAP/UNRIP and the Sm proteins SNRPB, SNRPD1, SNRPD2, SNRPD3, SNRPE, SNRPF and SNRPG; catalyzes core snRNPs assembly. Forms a 6S pICln-Sm complex composed of CLNS1A/pICln, SNRPD1, SNRPD2, SNRPE, SNRPF and SNRPG; ring-like structure where CLNS1A/pICln mimics additional Sm proteins and which is unable to assemble into the core snRNP. Interacts with SMN1; the interaction is direct. Interacts with GEMIN2; the interaction is direct. Interacts with SNRPD1; the interaction is direct. Interacts with SNRPF; the interaction is direct.

The protein localises to the cytoplasm. It is found in the cytosol. The protein resides in the nucleus. In terms of biological role, plays a role in pre-mRNA splicing as a core component of the spliceosomal U1, U2, U4 and U5 small nuclear ribonucleoproteins (snRNPs), the building blocks of the spliceosome. Component of both the pre-catalytic spliceosome B complex and activated spliceosome C complexes. As a component of the minor spliceosome, involved in the splicing of U12-type introns in pre-mRNAs. The sequence is that of Small nuclear ribonucleoprotein Sm D2 (SNRPD2) from Homo sapiens (Human).